The primary structure comprises 342 residues: Holliday junction branch migration complex subunit RuvB (342 aa).

The interval 1-181 (MENRMVTPFD…FGMLCAMEFY (181 aa)) is large ATPase domain (RuvB-L). ATP-binding positions include Leu20, Arg21, Gly62, Lys65, Thr66, Thr67, 128 to 130 (EDY), Arg171, Tyr181, and Arg218. Thr66 serves as a coordination point for Mg(2+). The interval 182–252 (TDEELMEIVV…GAKAALDLLE (71 aa)) is small ATPAse domain (RuvB-S). The head domain (RuvB-H) stretch occupies residues 255–342 (KEGLDKIDNK…KDNQVSIFNK (88 aa)). Residues Arg310 and Arg315 each coordinate DNA.

This sequence belongs to the RuvB family. As to quaternary structure, homohexamer. Forms an RuvA(8)-RuvB(12)-Holliday junction (HJ) complex. HJ DNA is sandwiched between 2 RuvA tetramers; dsDNA enters through RuvA and exits via RuvB. An RuvB hexamer assembles on each DNA strand where it exits the tetramer. Each RuvB hexamer is contacted by two RuvA subunits (via domain III) on 2 adjacent RuvB subunits; this complex drives branch migration. In the full resolvosome a probable DNA-RuvA(4)-RuvB(12)-RuvC(2) complex forms which resolves the HJ.

The protein resides in the cytoplasm. It carries out the reaction ATP + H2O = ADP + phosphate + H(+). Functionally, the RuvA-RuvB-RuvC complex processes Holliday junction (HJ) DNA during genetic recombination and DNA repair, while the RuvA-RuvB complex plays an important role in the rescue of blocked DNA replication forks via replication fork reversal (RFR). RuvA specifically binds to HJ cruciform DNA, conferring on it an open structure. The RuvB hexamer acts as an ATP-dependent pump, pulling dsDNA into and through the RuvAB complex. RuvB forms 2 homohexamers on either side of HJ DNA bound by 1 or 2 RuvA tetramers; 4 subunits per hexamer contact DNA at a time. Coordinated motions by a converter formed by DNA-disengaged RuvB subunits stimulates ATP hydrolysis and nucleotide exchange. Immobilization of the converter enables RuvB to convert the ATP-contained energy into a lever motion, pulling 2 nucleotides of DNA out of the RuvA tetramer per ATP hydrolyzed, thus driving DNA branch migration. The RuvB motors rotate together with the DNA substrate, which together with the progressing nucleotide cycle form the mechanistic basis for DNA recombination by continuous HJ branch migration. Branch migration allows RuvC to scan DNA until it finds its consensus sequence, where it cleaves and resolves cruciform DNA. The sequence is that of Holliday junction branch migration complex subunit RuvB from Clostridium botulinum (strain 657 / Type Ba4).